The primary structure comprises 889 residues: Low-affinity potassium transport protein (889 aa).

Over 1-51 the chain is Cytoplasmic; that stretch reads MPTAKRTSSRASLALPFQLRLVHKKSWGHRLRDFISGFLKSCRPIAKYVFP. The chain crosses the membrane as a helical span at residues 52-73; it reads NFIVVHYIYLITLSIIGSILLY. Residues 74–80 are Extracellular-facing; it reads PCKNTAF. Residues 81-101 traverse the membrane as a helical segment; sequence IDVLFLAAGASTQGGLATKST. Residues 102-109 are Cytoplasmic-facing; sequence NDFNLYQQ. The helical transmembrane segment at 110–130 threads the bilayer; it reads IVVYVITLLSTPILIHGFLAF. At 131 to 464 the chain is on the extracellular side; sequence VRLYWFERYF…EYRALRLLCC (334 aa). Residues 189–244 are disordered; it reads REDPRQSASDVPMDSPDTSALSSISPLNVSSSKEESSDTQSSPPNFSSKRQPSDVD. Residues 207 to 219 are compositionally biased toward low complexity; that stretch reads SALSSISPLNVSS. Asparagine 216, asparagine 233, and asparagine 265 each carry an N-linked (GlcNAc...) asparagine glycan. The helical transmembrane segment at 465-487 threads the bilayer; sequence ILMVYYIGFNILAFVTIVPWACT. Over 488 to 499 the chain is Cytoplasmic; the sequence is RHHYSEIIRRNG. The chain crosses the membrane as a helical span at residues 500 to 521; sequence VSPTWWGFFTAMSAFSNLGLSL. At 522 to 524 the chain is on the extracellular side; it reads TAD. Residues 525-545 traverse the membrane as a helical segment; sequence SMVSFDTAPYPLIFMMFFIII. Residues 546 to 548 lie on the Cytoplasmic side of the membrane; it reads GNT. A helical membrane pass occupies residues 549-569; sequence GFPIMLRFIIWIMFKTSRDLS. At 570-584 the chain is on the extracellular side; the sequence is QFKESLGFLLDHPRR. The helical transmembrane segment at 585–605 threads the bilayer; the sequence is CFTLLFPSGPTWWLFTTLVVL. Topologically, residues 606-609 are cytoplasmic; that stretch reads NATD. A helical membrane pass occupies residues 610 to 630; it reads WILFIILDFNSAVVRQVAKGY. Residues 631 to 657 are Extracellular-facing; it reads RALMGLFQSVCTRTAGFNVVDLSKLHP. A helical membrane pass occupies residues 658–678; that stretch reads SIQVSYMLMMYVSVLPLAISI. The Cytoplasmic segment spans residues 679 to 743; the sequence is RRTNVYEEQS…KSFVGAHLRR (65 aa). The disordered stretch occupies residues 705 to 733; the sequence is DDIKETDHDGESEERDTVSTKSKPKKQSP. A helical transmembrane segment spans residues 744–764; the sequence is QLSFDLWYLFLGLFIICICEG. Over 765–776 the chain is Extracellular; it reads RKIEDVNKPDFN. The helical transmembrane segment at 777–797 threads the bilayer; it reads VFAILFEVVSAYGTVGLSLGY. Residues 798-889 are Cytoplasmic-facing; sequence PNTNTSLSAQ…KIATKFWGKH (92 aa).

It belongs to the TrkH potassium transport family.

Its subcellular location is the membrane. In terms of biological role, this protein is required for low-affinity potassium transport. The protein is Low-affinity potassium transport protein (TRK2) of Saccharomyces cerevisiae (strain ATCC 204508 / S288c) (Baker's yeast).